A 214-amino-acid chain; its full sequence is Adenylate kinase (214 aa).

10 to 15 serves as a coordination point for ATP; the sequence is GAGKGT. Positions 30-59 are NMP; sequence STGDMLRAAVKAGTPLGLEAKKVMDAGQLV. Residues Thr31, Arg36, 57–59, 85–88, and Gln92 each bind AMP; these read QLV and GFPR. The LID stretch occupies residues 122–159; that stretch reads GRRVHPGSGRVYHIVFNQPKVEGKDDVTGEDLAIRPDD. ATP contacts are provided by residues Arg123 and 132–133; that span reads VY. Residues Arg156 and Arg167 each coordinate AMP. Residue Gln200 participates in ATP binding.

The protein belongs to the adenylate kinase family. Monomer.

The protein localises to the cytoplasm. It carries out the reaction AMP + ATP = 2 ADP. It functions in the pathway purine metabolism; AMP biosynthesis via salvage pathway; AMP from ADP: step 1/1. In terms of biological role, catalyzes the reversible transfer of the terminal phosphate group between ATP and AMP. Plays an important role in cellular energy homeostasis and in adenine nucleotide metabolism. The polypeptide is Adenylate kinase (Shewanella woodyi (strain ATCC 51908 / MS32)).